The sequence spans 350 residues: Quinone oxidoreductase-like protein 2 (350 aa).

Lys-36 carries the post-translational modification N6-acetyllysine. An N6-succinyllysine modification is found at Lys-201. An N6-acetyllysine mark is found at Lys-302 and Lys-328.

This sequence belongs to the zinc-containing alcohol dehydrogenase family. Quinone oxidoreductase subfamily.

The polypeptide is Quinone oxidoreductase-like protein 2 (Mus musculus (Mouse)).